The following is a 382-amino-acid chain: Protein phosphatase 1A (382 aa).

The N-myristoyl glycine moiety is linked to residue glycine 2. The PPM-type phosphatase domain occupies 23 to 291 (RYGLSSMQGW…DNMSVILICF (269 aa)). Mn(2+) is bound by residues aspartate 60, glycine 61, aspartate 239, and aspartate 282. Residues serine 375 and serine 377 each carry the phosphoserine modification.

The protein belongs to the PP2C family. Monomer. Interacts with SMAD2; the interaction dephosphorylates SMAD2 in its C-terminal SXS motif resulting in disruption of the SMAD2/SMAD4 complex, SMAD2 nuclear export and termination of the TGF-beta-mediated signaling. Interacts with SMAD2; the interaction dephosphorylates SMAD2 in its C-terminal SXS motif resulting in disruption of the SMAD2/SMAD4 complex, SMAD2 nuclear export and termination of the TGF-beta-mediated signaling. Interacts with the phosphorylated form of IKBKB/IKKB. Requires Mg(2+) as cofactor. Mn(2+) is required as a cofactor. Post-translationally, N-myristoylation is essential for the recognition of its substrates for dephosphorylation.

Its subcellular location is the nucleus. It localises to the cytoplasm. The protein localises to the cytosol. It is found in the membrane. It carries out the reaction O-phospho-L-seryl-[protein] + H2O = L-seryl-[protein] + phosphate. The enzyme catalyses O-phospho-L-threonyl-[protein] + H2O = L-threonyl-[protein] + phosphate. Its function is as follows. Enzyme with a broad specificity. Negatively regulates TGF-beta signaling through dephosphorylating SMAD2 and SMAD3, resulting in their dissociation from SMAD4, nuclear export of the SMADs and termination of the TGF-beta-mediated signaling. Dephosphorylates PRKAA1 and PRKAA2. Plays an important role in the termination of TNF-alpha-mediated NF-kappa-B activation through dephosphorylating and inactivating IKBKB/IKKB. In Bos taurus (Bovine), this protein is Protein phosphatase 1A (PPM1A).